The following is a 657-amino-acid chain: Glycogen debranching enzyme (657 aa).

The Nucleophile role is filled by aspartate 336. The Proton donor role is filled by glutamate 371. The segment at 460–479 (ANGEENRDGTNNNYSNNHGK) is disordered.

Belongs to the glycosyl hydrolase 13 family.

The enzyme catalyses Hydrolysis of (1-&gt;6)-alpha-D-glucosidic linkages to branches with degrees of polymerization of three or four glucose residues in limit dextrin.. It functions in the pathway glycan degradation; glycogen degradation. Functionally, removes maltotriose and maltotetraose chains that are attached by 1,6-alpha-linkage to the limit dextrin main chain, generating a debranched limit dextrin. The chain is Glycogen debranching enzyme from Shigella flexneri serotype 5b (strain 8401).